We begin with the raw amino-acid sequence, 344 residues long: Interactor of constitutive active ROPs 1 (344 aa).

Disordered stretches follow at residues 1–74 (MPRP…ESQL), 92–139 (EAVK…KETD), 186–218 (HESLGKENESLKNQLSDSASEISNVKANEDEMV), and 307–344 (FMDPPGMADDYDDGLGSGKRKSSGMKMFGELWRKKGQK). Over residues 19-29 (SSSSTSDSNHS) the composition is skewed to low complexity. A coiled-coil region spans residues 60-108 (QKKLGGRISDLESQLGQAQEELRLLKEQLANAEAVKKQAQDELHKKSKK). Composition is skewed to basic and acidic residues over residues 93–103 (AVKKQAQDELH), 114–139 (RVEESATEAERIDRDEIPGDVQKETD), and 186–195 (HESLGKENES). Positions 145–273 (VEKIAVEEEE…EQWRKAADAA (129 aa)) form a coiled coil. Residues 196 to 211 (LKNQLSDSASEISNVK) are compositionally biased toward polar residues.

It belongs to the ICR family. As to quaternary structure, homooligomer. Interacts with ARAC3, ARAC4, ARAC8, ARAC11 and SEC3A, but not with ICR2 or EXO70A1. Expressed in mature and germinating pollen. Expressed throughout the embryo but not in the hypophysis and quiescent center (QC). In roots, absent from the QC and the stem cells.

Its subcellular location is the cell membrane. It is found in the nucleus. Functionally, acts as a scaffold, mediating interaction of ROPs with different proteins. Required for primary and adventitious root maintenance, but not for their formation. Promotes the stabilization of ARAC11 on the plasma membrane of the pollen tube initiation site but not the activation of ARAC11. Regulates directionality of polar auxin transport, and is required for the formation of a stable auxin maximum and tip localized auxin gradient during embryogenesis, organogenesis, and meristem activity. Involved in exocytosis and in the recycling of PIN proteins back to the plasma membrane. This is Interactor of constitutive active ROPs 1 (ICR1) from Arabidopsis thaliana (Mouse-ear cress).